A 504-amino-acid polypeptide reads, in one-letter code: MADIEMSEASKTPVVAEEVVDPVQKANEASLLTFADLKKNIGLIDKGVDTKEMRFIISVLRQTQSIRKKLNYKVLNQIVNFAFSHQNHATKKNFLLSFLKSDGSSMDIDSTTQAEKETTPSSSSSHLNIEVESYIHLLVLIYLIDQKKYEDATKCSSALMETVQSNTRITLYPLSSKIFFYYSLSYEMTNNLHEVRSTLLSALRTATLRHNDEGQATIINLLLRNYLEYNLFEQADKLLANTQFPESASSNQFARYFYYQGRIRAIQLEYAESFKFLTQAIRKAPQNTAGGFRRTVYKLLSIVQLLMGEIPERNTFSQKQLKIALKPYFHLTEAVRVGDLGSFNQALEQNSDIFKSDQTFTLVQRLRSNVIKAGLKKLNTAYSRISFNDICTKLKFDGTTQDIMFIIAKTIKDGVIDATINYEGGYLQSRENIDAYSTQEPLHAFSNRIDICLKIHNDSLKAMRFHPDLNKAETEKIAEVAKTIKEEMERQAEESSDNEGDSDF.

Positions 254 to 434 constitute a PCI domain; it reads ARYFYYQGRI…GYLQSRENID (181 aa). Residues 485–504 form a disordered region; it reads KEEMERQAEESSDNEGDSDF. The span at 494-504 shows a compositional bias: acidic residues; sequence ESSDNEGDSDF.

Belongs to the proteasome subunit S3 family. The 26S proteasome is composed of a core protease, known as the 20S proteasome, capped at one or both ends by the 19S regulatory complex (RC). The RC is composed of at least 18 different subunits in two subcomplexes, the base and the lid, which form the portions proximal and distal to the 20S proteolytic core, respectively.

Functionally, acts as a regulatory subunit of the 26 proteasome which is involved in the ATP-dependent degradation of ubiquitinated proteins. The chain is 26S proteasome non-ATPase regulatory subunit 3 (psmD3) from Dictyostelium discoideum (Social amoeba).